Consider the following 237-residue polypeptide: LexA repressor (237 aa).

Residues 1-12 (MPVKDSSSNKKN) show a composition bias toward polar residues. Residues 1 to 20 (MPVKDSSSNKKNQIGKLSER) are disordered. Positions 41-61 (IREIGDAAGLQSTSSVAYQLK) form a DNA-binding region, H-T-H motif. Basic and acidic residues predominate over residues 67 to 80 (GYLRRDPNKPRAVD). The disordered stretch occupies residues 67–112 (GYLRRDPNKPRAVDVRALPDPIPSKPGRKPGPKKSSVAISPDPAET). Residues Ser-161 and Lys-198 each act as for autocatalytic cleavage activity in the active site.

The protein belongs to the peptidase S24 family. Homodimer.

It carries out the reaction Hydrolysis of Ala-|-Gly bond in repressor LexA.. In terms of biological role, represses a number of genes involved in the response to DNA damage (SOS response), including recA and lexA. In the presence of single-stranded DNA, RecA interacts with LexA causing an autocatalytic cleavage which disrupts the DNA-binding part of LexA, leading to derepression of the SOS regulon and eventually DNA repair. This Corynebacterium diphtheriae (strain ATCC 700971 / NCTC 13129 / Biotype gravis) protein is LexA repressor.